Reading from the N-terminus, the 294-residue chain is 2-oxoglutaramate amidase (294 aa).

The region spanning 16–261 (LDVAAVQVKF…EAVLRATLNF (246 aa)) is the CN hydrolase domain. The active-site Proton acceptor is E55. The active-site Proton donor is K129. Catalysis depends on C168, which acts as the Nucleophile.

The protein belongs to the carbon-nitrogen hydrolase superfamily. NIT1/NIT2 family.

It catalyses the reaction 2-oxoglutaramate + H2O = 2-oxoglutarate + NH4(+). It participates in alkaloid degradation; nicotine degradation. In terms of biological role, catalyzes the conversion of 2-oxoglutaramate to 2-oxoglutarate. Together with glutamate dehydrogenase, may form a physiologically relevant enzyme couple, leading to transformation of metabolically inert 2-oxoglutaramate derived from trihydroxypyridine into glutamate, a central compound of nitrogen metabolism. This chain is 2-oxoglutaramate amidase, found in Paenarthrobacter nicotinovorans (Arthrobacter nicotinovorans).